Reading from the N-terminus, the 213-residue chain is Probable nicotinate-nucleotide adenylyltransferase (213 aa).

Belongs to the NadD family.

It carries out the reaction nicotinate beta-D-ribonucleotide + ATP + H(+) = deamido-NAD(+) + diphosphate. It participates in cofactor biosynthesis; NAD(+) biosynthesis; deamido-NAD(+) from nicotinate D-ribonucleotide: step 1/1. Catalyzes the reversible adenylation of nicotinate mononucleotide (NaMN) to nicotinic acid adenine dinucleotide (NaAD). This Shigella boydii serotype 18 (strain CDC 3083-94 / BS512) protein is Probable nicotinate-nucleotide adenylyltransferase.